The sequence spans 754 residues: RNA exonuclease 5 (754 aa).

The segment at 1-36 (MELEEEENPRKRKETPNSALTTELDRPSWDVQDPEP) is disordered. The 149-residue stretch at 222-370 (LFGLDCEVCL…EDARTALELV (149 aa)) folds into the Exonuclease domain. RRM domains are found at residues 488 to 562 (STIY…RLLT) and 583 to 662 (GTIY…RHLQ).

In Rattus norvegicus (Rat), this protein is RNA exonuclease 5 (Rexo5).